We begin with the raw amino-acid sequence, 368 residues long: Core histone macro-H2A.1 (368 aa).

The Histone H2A domain occupies Ser2–Lys117. N6-lactoyllysine; alternate occurs at positions 7 and 9. N6-methyllysine is present on Lys18. Residue Lys116 is modified to N6-acetyllysine; alternate. Lys116 is covalently cross-linked (Glycyl lysine isopeptide (Lys-Gly) (interchain with G-Cter in ubiquitin); alternate). Lys117 is covalently cross-linked (Glycyl lysine isopeptide (Lys-Gly) (interchain with G-Cter in ubiquitin)). An N6-acetyllysine; alternate modification is found at Lys123. The residue at position 123 (Lys123) is an N6,N6-dimethyllysine; alternate. Lys123 is covalently cross-linked (Glycyl lysine isopeptide (Lys-Gly) (interchain with G-Cter in SUMO2); alternate). Residues Ile128–Thr179 form a disordered region. Thr129 carries the post-translational modification Phosphothreonine. Over residues Pro144 to Lys159 the composition is skewed to basic residues. Lys166 is covalently cross-linked (Glycyl lysine isopeptide (Lys-Gly) (interchain with G-Cter in SUMO2)). Phosphoserine occurs at positions 169 and 172. Residues Thr183 to Asp366 form the Macro domain. Lys188 participates in a covalent cross-link: Glycyl lysine isopeptide (Lys-Gly) (interchain with G-Cter in SUMO2). Asp202, Ile203, Val225, Ser274, Gly311, Ser312, Gly313, and Asn315 together coordinate a glycoprotein. Lys319 participates in a covalent cross-link: Glycyl lysine isopeptide (Lys-Gly) (interchain with G-Cter in SUMO2).

The protein belongs to the histone H2A family. The nucleosome is a histone octamer containing two molecules each of H2A, H2B, H3 and H4 assembled in one H3-H4 heterotetramer and two H2A-H2B heterodimers. Interacts with HDAC1 and HDAC2. Interacts with SPOP. Part of a complex consisting of MACROH2A1, CUL3 and SPOP. As to quaternary structure, interacts with PARP1. Monoubiquitinated at either Lys-116 or Lys-117. May also be polyubiquitinated. Ubiquitination is mediated by the CUL3/SPOP E3 complex and does not promote proteasomal degradation. Instead, it is required for enrichment in inactive X chromosome chromatin. In terms of tissue distribution, present only in liver and brain (at protein level). As to expression, present in brain, thymus, testis, liver and kidney (at protein level).

The protein resides in the nucleus. Its subcellular location is the chromosome. In terms of biological role, variant histone H2A which replaces conventional H2A in a subset of nucleosomes where it represses transcription. Nucleosomes wrap and compact DNA into chromatin, limiting DNA accessibility to the cellular machineries which require DNA as a template. Histones thereby play a central role in transcription regulation, DNA repair, DNA replication and chromosomal stability. DNA accessibility is regulated via a complex set of post-translational modifications of histones, also called histone code, and nucleosome remodeling. Involved in stable X chromosome inactivation. Inhibits the binding of transcription factors, including NF-kappa-B, and interferes with the activity of remodeling SWI/SNF complexes. Inhibits histone acetylation by EP300 and recruits class I HDACs, which induces a hypoacetylated state of chromatin. Functionally, isoform that specifically binds poly-ADP-ribose and O-acetyl-ADP-ribose and plays a key role in NAD(+) metabolism. Able to bind to the ends of poly-ADP-ribose chains created by PARP1 and cap them. This prevents PARP1 from further addition of ADP-ribose and thus limits the consumption of nuclear NAD(+), allowing the cell to maintain proper NAD(+) levels in both the nucleus and the mitochondria to promote proper mitochondrial respiration. Increases the expression of genes involved in redox metabolism, including SOD3. Its function is as follows. In contrast to isoform 1, does not bind poly-ADP-ribose. Represses SOD3 gene expression. This Rattus norvegicus (Rat) protein is Core histone macro-H2A.1.